Here is a 370-residue protein sequence, read N- to C-terminus: Biotin synthase (370 aa).

One can recognise a Radical SAM core domain in the interval 56 to 283; that stretch reads NAVQVSTLLS…KSHVRLSAGR (228 aa). [4Fe-4S] cluster is bound by residues Cys-71, Cys-75, and Cys-78. 4 residues coordinate [2Fe-2S] cluster: Cys-115, Cys-146, Cys-206, and Arg-278. Residues 327–344 show a composition bias toward basic and acidic residues; it reads GLHPEPSDPHADDAHRDD. The segment at 327–346 is disordered; the sequence is GLHPEPSDPHADDAHRDDEQ.

Belongs to the radical SAM superfamily. Biotin synthase family. Homodimer. The cofactor is [4Fe-4S] cluster. It depends on [2Fe-2S] cluster as a cofactor.

It catalyses the reaction (4R,5S)-dethiobiotin + (sulfur carrier)-SH + 2 reduced [2Fe-2S]-[ferredoxin] + 2 S-adenosyl-L-methionine = (sulfur carrier)-H + biotin + 2 5'-deoxyadenosine + 2 L-methionine + 2 oxidized [2Fe-2S]-[ferredoxin]. Its pathway is cofactor biosynthesis; biotin biosynthesis; biotin from 7,8-diaminononanoate: step 2/2. Its function is as follows. Catalyzes the conversion of dethiobiotin (DTB) to biotin by the insertion of a sulfur atom into dethiobiotin via a radical-based mechanism. This is Biotin synthase from Chromohalobacter salexigens (strain ATCC BAA-138 / DSM 3043 / CIP 106854 / NCIMB 13768 / 1H11).